Here is a 338-residue protein sequence, read N- to C-terminus: Activator of 90 kDa heat shock protein ATPase homolog 1 (338 aa).

At Lys-3 the chain carries N6-acetyllysine. Lys-182 is covalently cross-linked (Glycyl lysine isopeptide (Lys-Gly) (interchain with G-Cter in SUMO1)). Phosphoserine is present on Ser-193. Residue Lys-203 forms a Glycyl lysine isopeptide (Lys-Gly) (interchain with G-Cter in SUMO2) linkage. Lys-212 carries the post-translational modification N6-acetyllysine. Phosphotyrosine; by ABL is present on Tyr-223.

It belongs to the AHA1 family. Interacts with HSPCA/HSP90. Interacts with HSP90AA1; the interaction activates HSP90AA1 ATPase activity. Interacts with HSP90AB1. Interacts with GCH1. Interacts with SRPK1. Interacts with FLCN. In terms of processing, phosphorylation at Tyr-223 enhances binding to chaperone HSP90AA1.

The protein localises to the cytoplasm. The protein resides in the cytosol. Its subcellular location is the endoplasmic reticulum. In terms of biological role, acts as a co-chaperone of HSP90AA1. Activates the ATPase activity of HSP90AA1 leading to increase in its chaperone activity. Competes with the inhibitory co-chaperone FNIP1 for binding to HSP90AA1, thereby providing a reciprocal regulatory mechanism for chaperoning of client proteins. Competes with the inhibitory co-chaperone TSC1 for binding to HSP90AA1, thereby providing a reciprocal regulatory mechanism for chaperoning of client proteins. The polypeptide is Activator of 90 kDa heat shock protein ATPase homolog 1 (Ahsa1) (Mus musculus (Mouse)).